Here is a 548-residue protein sequence, read N- to C-terminus: Probable malate:quinone oxidoreductase (548 aa).

The tract at residues Asp521–Leu548 is disordered. The span at Pro530 to Lys541 shows a compositional bias: low complexity.

Belongs to the MQO family. It depends on FAD as a cofactor.

The enzyme catalyses (S)-malate + a quinone = a quinol + oxaloacetate. Its pathway is carbohydrate metabolism; tricarboxylic acid cycle; oxaloacetate from (S)-malate (quinone route): step 1/1. This Shigella sonnei (strain Ss046) protein is Probable malate:quinone oxidoreductase.